Here is a 372-residue protein sequence, read N- to C-terminus: MAKQYDSVECPFCDEVTKYEKLAKIGQGTFGEVFKAKHRQTGQKVALKKVLMENEKEGFPITALREIKILQLLKHENVVNLIEICRTKASPYNRCKGSIYLVFDFCEHDLAGLLSNVLVKFTLSEIKRVMQMLLNGLYYIHRNKILHRDMKAANVLITRDGVLKLADFGLARAFSLAKNSQPNRYTNRVVTLWYRPPELLLGERDYGPPIDLWGAGCIMAEMWTRSPIMQGNTEQHQLALISQLCGSITPEVWPNVDKYELFEKLELVKGQKRKVKDRLKAYVRDPYALDLIDKLLVLDPAQRIDSDDALNHDFFWSDPMPSDLKGMLSTHLTSMFEYLAPPRRKGSQITQQSTNQSRNPATTNQTEFERVF.

Residues 19-315 enclose the Protein kinase domain; it reads YEKLAKIGQG…SDDALNHDFF (297 aa). 25–33 contributes to the ATP binding site; it reads IGQGTFGEV. An N6-acetyllysine; by EP300/CBP, PCAF/KAT2B and GCN5/KAT2A modification is found at K44. Residues K48 and 104–106 each bind ATP; that span reads DFC. N6-acetyllysine; by PCAF/KAT2B and GCN5/KAT2A is present on K48. D149 (proton acceptor) is an active-site residue. Residues 166–191 form a T-loop region; sequence ADFGLARAFSLAKNSQPNRYTNRVVT. Residue D167 coordinates ATP. Residue S175 is modified to Phosphoserine. At T186 the chain carries Phosphothreonine; by CaMK1D. Positions 343-372 are disordered; it reads RRKGSQITQQSTNQSRNPATTNQTEFERVF. S347 is subject to Phosphoserine; by CDK9 and PKA. The span at 347 to 366 shows a compositional bias: polar residues; that stretch reads SQITQQSTNQSRNPATTNQT. A Phosphothreonine; by CDK9 modification is found at T350. Residue S353 is modified to Phosphoserine; by CDK9. The residue at position 354 (T354) is a Phosphothreonine; by CDK9. S357 carries the post-translational modification Phosphoserine; by CDK9. 2 positions are modified to phosphothreonine; by CDK9: T362 and T363.

Belongs to the protein kinase superfamily. CMGC Ser/Thr protein kinase family. CDC2/CDKX subfamily. As to quaternary structure, component of the super elongation complex (SEC), at least composed of EAF1, EAF2, CDK9, MLLT3/AF9, AFF (AFF1 or AFF4), the P-TEFb complex and ELL (ELL, ELL2 or ELL3). Associates with CCNT1/cyclin-T1, CCNT2/cyclin-T2 (isoform A and isoform B) or CCNK/cyclin-K to form active P-TEFb. P-TEFb forms a complex with AFF4/AF5Q31 and is part of the super elongation complex (SEC). Component of a complex which is composed of at least 5 members: HTATSF1/Tat-SF1, P-TEFb complex, RNA pol II, SUPT5H, and NCL/nucleolin. Associates with UBR5 and forms a transcription regulatory complex composed of CDK9, RNAP II, UBR5 and TFIIS/TCEA1 that can stimulate target gene transcription (e.g. gamma fibrinogen/FGG) by recruiting their promoters. Component of the 7SK snRNP inactive complex which is composed of at least 8 members: P-TEFb (composed of CDK9 and CCNT1/cyclin-T1), HEXIM1, HEXIM2, LARP7, BCDIN3, SART3 proteins and 7SK and U6 snRNAs. This inactive 7SK snRNP complex can also interact with NCOR1 and HDAC3, probably to regulate CDK9 acetylation. Release of P-TEFb from P-TEFb/7SK snRNP complex requires both PP2B to transduce calcium Ca(2+) signaling in response to stimuli (e.g. UV or hexamethylene bisacetamide (HMBA)), and PPP1CA to dephosphorylate Thr-186. This released P-TEFb remains inactive in the pre-initiation complex with BRD4 until new Thr-186 phosphorylation occurs after the synthesis of a short RNA. Interacts with BRD4; to target chromatin binding. Interacts with JMJD6. Interacts with activated nuclear STAT3 and RELA/p65. Binds to AR and MYOD1. Forms a complex composed of CDK9, CCNT1/cyclin-T1, EP300 and GATA4 that stimulates hypertrophy in cardiomyocytes. The large PER complex involved in the repression of transcriptional termination is composed of at least PER2, CDK9, DDX5, DHX9, NCBP1 and POLR2A (active). Interacts with HSF1. Interacts with TBX21. Interacts with WDR43. Interacts with ZMYND8; the association appears to occur between homodimeric ZMYND8 and the activated form of the P-TEFb complex. In terms of processing, autophosphorylation at Thr-186, Ser-347, Thr-350, Ser-353, Thr-354 and Ser-357 triggers kinase activity by promoting cyclin and substrate binding upon conformational changes. Thr-186 phosphorylation requires the calcium Ca(2+) signaling pathway, including CaMK1D and calmodulin. This inhibition is relieved by Thr-29 dephosphorylation. Phosphorylation at Ser-175 inhibits kinase activity. Can be phosphorylated on either Thr-362 or Thr-363 but not on both simultaneously. Post-translationally, dephosphorylation of Thr-186 by PPM1A and PPM1B blocks CDK9 activity and may lead to CDK9 proteasomal degradation. However, PPP1CA-mediated Thr-186 dephosphorylation is required to release P-TEFb from its inactive P-TEFb/7SK snRNP complex. Dephosphorylated at Ser-347 by the PNUTS-PP1 complex during RNA polymerase II transcription pause-release. Dephosphorylation of C-terminus Thr and Ser residues by protein phosphatase-1 (PP1) triggers CDK9 activity. N6-acetylation of Lys-44 promotes kinase activity, whereas acetylation of both Lys-44 and Lys-48 mediated by PCAF/KAT2B and GCN5/KAT2A reduces kinase activity. The acetylated form associates with PML bodies in the nuclear matrix and with the transcriptionally silent HIV-1 genome; deacetylated upon transcription stimulation. Deacetylated by SIRT7, promoting the kinase activity and subsequent 'Ser-2' phosphorylation of the C-terminal domain (CTD) of RNA polymerase II. In terms of processing, polyubiquitinated and thus activated by UBR5. This ubiquitination is promoted by TFIIS/TCEA1 and favors 'Ser-2' phosphorylation of RPB1/POLR2A CTD. In terms of tissue distribution, expressed at high levels in brain and kidney.

The protein resides in the nucleus. It is found in the cytoplasm. It localises to the PML body. It carries out the reaction L-seryl-[protein] + ATP = O-phospho-L-seryl-[protein] + ADP + H(+). The catalysed reaction is L-threonyl-[protein] + ATP = O-phospho-L-threonyl-[protein] + ADP + H(+). The enzyme catalyses [DNA-directed RNA polymerase] + ATP = phospho-[DNA-directed RNA polymerase] + ADP + H(+). Its activity is regulated as follows. Activation by Thr-186 phosphorylation is calcium Ca(2+) signaling pathway-dependent; actively inactivated by dephosphorylation mediated by PPP1CA, PPM1A and PPM1B. Reversibly repressed by acetylation at Lys-44 and Lys-48. In terms of biological role, protein kinase involved in the regulation of transcription. Member of the cyclin-dependent kinase pair (CDK9/cyclin-T) complex, also called positive transcription elongation factor b (P-TEFb), which facilitates the transition from abortive to productive elongation by phosphorylating the CTD (C-terminal domain) of the large subunit of RNA polymerase II (RNAP II) POLR2A, SUPT5H and RDBP. This complex is inactive when in the 7SK snRNP complex form. Phosphorylates EP300, MYOD1, RPB1/POLR2A and AR and the negative elongation factors DSIF and NELFE. Regulates cytokine inducible transcription networks by facilitating promoter recognition of target transcription factors (e.g. TNF-inducible RELA/p65 activation and IL-6-inducible STAT3 signaling). Promotes RNA synthesis in genetic programs for cell growth, differentiation and viral pathogenesis. P-TEFb is also involved in cotranscriptional histone modification, mRNA processing and mRNA export. Modulates a complex network of chromatin modifications including histone H2B monoubiquitination (H2Bub1), H3 lysine 4 trimethylation (H3K4me3) and H3K36me3; integrates phosphorylation during transcription with chromatin modifications to control co-transcriptional histone mRNA processing. The CDK9/cyclin-K complex has also a kinase activity towards CTD of RNAP II and can substitute for CDK9/cyclin-T P-TEFb in vitro. Replication stress response protein; the CDK9/cyclin-K complex is required for genome integrity maintenance, by promoting cell cycle recovery from replication arrest and limiting single-stranded DNA amount in response to replication stress, thus reducing the breakdown of stalled replication forks and avoiding DNA damage. In addition, probable function in DNA repair of isoform 2 via interaction with KU70/XRCC6. Promotes cardiac myocyte enlargement. RPB1/POLR2A phosphorylation on 'Ser-2' in CTD activates transcription. AR phosphorylation modulates AR transcription factor promoter selectivity and cell growth. DSIF and NELF phosphorylation promotes transcription by inhibiting their negative effect. The phosphorylation of MYOD1 enhances its transcriptional activity and thus promotes muscle differentiation. Catalyzes phosphorylation of KAT5, promoting KAT5 recruitment to chromatin and histone acetyltransferase activity. The sequence is that of Cyclin-dependent kinase 9 (Cdk9) from Mus musculus (Mouse).